Here is a 347-residue protein sequence, read N- to C-terminus: NADH-ubiquinone oxidoreductase chain 2 (347 aa).

11 consecutive transmembrane segments (helical) span residues 3–23 (PLIFTMILLTVMLGTAIVMTT), 25–45 (HWVMAWIGFEMNMLAVIPILM), 59–79 (YFLTQATASMLLMLAIVINLV), 96–116 (IIMTLALAMKLGLAPFHFWVP), 122–142 (VQLSSGLILLTWQKLAPMSIL), 149–169 (INLDLLLLMSLLSILVGGWGG), 178–198 (IMAYSSIAHMGWMTAIMVYNP), 200–220 (MALLNLVIYILLTTTTFMMLM), 240–260 (LTTAILTIMLSLGGLPPLSGF), 276–296 (MIMPTIMAVMALLNLYFYMRL), and 326–346 (LSPLIILSTLILPLSPMLALL).

This sequence belongs to the complex I subunit 2 family. In terms of assembly, core subunit of respiratory chain NADH dehydrogenase (Complex I) which is composed of 45 different subunits. Interacts with TMEM242.

The protein resides in the mitochondrion inner membrane. The catalysed reaction is a ubiquinone + NADH + 5 H(+)(in) = a ubiquinol + NAD(+) + 4 H(+)(out). Core subunit of the mitochondrial membrane respiratory chain NADH dehydrogenase (Complex I) which catalyzes electron transfer from NADH through the respiratory chain, using ubiquinone as an electron acceptor. Essential for the catalytic activity and assembly of complex I. The sequence is that of NADH-ubiquinone oxidoreductase chain 2 from Nyctimene albiventer (Common tube-nosed fruit bat).